We begin with the raw amino-acid sequence, 324 residues long: Polycomb complex protein BMI-1-B (324 aa).

The segment at 18-57 (CVLCGGYFIDATTIVECLHSFCKMCIVRYLETSKYCPICD) adopts an RING-type zinc-finger fold. The Nuclear localization signal motif lies at 81 to 95 (KLVPGLFKNEMKRRR). Positions 232–324 (IKLSSPRNDM…TSHNGSNSLG (93 aa)) are disordered. Residues 256-279 (DKPNSPSIVAAPSTSSSMPSPNTP) show a composition bias toward low complexity. Polar residues-rich tracts occupy residues 280 to 295 (VQST…TING) and 303 to 324 (NGQT…NSLG).

As to quaternary structure, component of a PRC1-like complex. Homodimer. Interacts with cbx2.

The protein localises to the nucleus. Its function is as follows. Component of a Polycomb group (PcG) multiprotein PRC1-like complex, a complex class required to maintain the transcriptionally repressive state of many genes, including Hox genes, throughout development. PcG PRC1 complex acts via chromatin remodeling and modification of histones; it mediates monoubiquitination of histone H2A 'Lys-119', rendering chromatin heritably changed in its expressibility. In the PRC1 complex, it is required to stimulate the E3 ubiquitin-protein ligase activity of rnf2. The chain is Polycomb complex protein BMI-1-B (bmi1b) from Danio rerio (Zebrafish).